We begin with the raw amino-acid sequence, 338 residues long: D-erythrose-4-phosphate dehydrogenase (338 aa).

Position 11 to 12 (11 to 12) interacts with NAD(+); that stretch reads RI. Residues 153-155, R199, 212-213, and R235 each bind substrate; these read SCT and TK. The active-site Nucleophile is the C154. Residue N317 coordinates NAD(+).

Belongs to the glyceraldehyde-3-phosphate dehydrogenase family. Epd subfamily. Homotetramer.

The protein localises to the cytoplasm. The enzyme catalyses D-erythrose 4-phosphate + NAD(+) + H2O = 4-phospho-D-erythronate + NADH + 2 H(+). It functions in the pathway cofactor biosynthesis; pyridoxine 5'-phosphate biosynthesis; pyridoxine 5'-phosphate from D-erythrose 4-phosphate: step 1/5. In terms of biological role, catalyzes the NAD-dependent conversion of D-erythrose 4-phosphate to 4-phosphoerythronate. This chain is D-erythrose-4-phosphate dehydrogenase, found in Shewanella loihica (strain ATCC BAA-1088 / PV-4).